The primary structure comprises 152 residues: 6,7-dimethyl-8-ribityllumazine synthase (152 aa).

5-amino-6-(D-ribitylamino)uracil is bound by residues F18, 49-51 (ALE), and 75-77 (CVI). 80 to 81 (ET) is a (2S)-2-hydroxy-3-oxobutyl phosphate binding site. Catalysis depends on H83, which acts as the Proton donor. N108 is a 5-amino-6-(D-ribitylamino)uracil binding site. R122 serves as a coordination point for (2S)-2-hydroxy-3-oxobutyl phosphate.

This sequence belongs to the DMRL synthase family.

The enzyme catalyses (2S)-2-hydroxy-3-oxobutyl phosphate + 5-amino-6-(D-ribitylamino)uracil = 6,7-dimethyl-8-(1-D-ribityl)lumazine + phosphate + 2 H2O + H(+). The protein operates within cofactor biosynthesis; riboflavin biosynthesis; riboflavin from 2-hydroxy-3-oxobutyl phosphate and 5-amino-6-(D-ribitylamino)uracil: step 1/2. Functionally, catalyzes the formation of 6,7-dimethyl-8-ribityllumazine by condensation of 5-amino-6-(D-ribitylamino)uracil with 3,4-dihydroxy-2-butanone 4-phosphate. This is the penultimate step in the biosynthesis of riboflavin. The protein is 6,7-dimethyl-8-ribityllumazine synthase of Bartonella bacilliformis (strain ATCC 35685 / KC583 / Herrer 020/F12,63).